The primary structure comprises 1249 residues: MHLFKRIALTLWLIISSTLAVVITEDRVDRGTISVNLGEVTVNSGASWSIINNAVTAFAGKINVQSGGGLYISSTSPLLALQVTLTSLLDSITNDGVISLDSRASLTASNYNLIGLSFTNNGEMYLAASGVLPSTMDLTAASWTNNGLIVAYQNQRSSGVLNLGTPLGAITNNGQICLYNQVYQQQTRIEGSGCITANKNSAIYISNAVLPVATTQNFYLQDSKSSMIVQAVSSTQTFNVYGFGNGNKIGITLPAVGIPPNPAYSYDVDTGILTVRAGLLSQKFNIGLGYYSLFFSVVTDNGAGLPSTILGSISYSGPVPSRNLPASCKIACKPVPTAPGTNPTEYTTTITTTNSAGNPLTETGVVDISTDSNGSWFTTTSIFPTTSQSSSSETVASSSQPDSSSTEPSAFPSSTGDSSAEPSITSDYSSSELSVVPSSASESASESSAEPSSASESASESGSESVASETSASESASEQSSTSESVSSEFASSDSSSEPSSASESSVESSSASEFVVPSSATETSVSESASESSAEPSSASESVASESAVSETSASESAAPSSASETSVSESAASSSASESFASESSVESSAVPSSASEFSTSESVASETPASETPASETPASESASEQSSTSESSAEISSASESSAEPSSAKSAISESASEFSAAPSSASQSSASQSSTNESSSQQSSAESSSTGTSSVSASAATSEYTATWTTTNSDGSVSTESGIISQSGSSFTTITTFVPDATSEYTTTWTTTNSDGSVSTESGIVSQSGSSFTTITTFAPDATSEYTTTWTTTNSDGSVSTESGVVSQSGTSLTTITTFAPDVTSEYTTTWTTTNSDGSVSTESGIVSQSGSSFTTITTFEPPVVCKRDDVNCGSSIGLSTPYYGNSSQPLSSTKMTDTSATQTVDSSLSSITDATTTQSVNSLETPVPTSGSGNGSNNGSDNGSNNGSNNGSNNGSGSGNGSNNGSNNGSGSGNGFNNGSDNGSNNGSGNASNNGSASGSGSDNGSDNGSDNGSDNGSNNGSNTDNGSNSGSDSGNGIDNGSGNGSSDGSDNGTTNGSGSGGESNNGSGNGSDNGSSPDNGSNNGSNNGSNNGSGDGIGTGSNSDTDNGSGNGSNNGSGSVNGSANGSGNGSNNGSNSGSNSDNGSNNSSGNGSSSDLGSVSGTGNGSNEGSSNESGANNGSNNGAGALPAATLSVVPSPSADSGSTSSASAMVIPNTNGSGKLLNGKVLTLSVLSSMVVVFL.

The signal sequence occupies residues 1–20 (MHLFKRIALTLWLIISSTLA). A glycan (N-linked (GlcNAc...) asparagine) is linked at N373. Over residues 383 to 415 (FPTTSQSSSSETVASSSQPDSSSTEPSAFPSST) the composition is skewed to low complexity. Disordered stretches follow at residues 383–729 (FPTT…SGII) and 883–1217 (GLST…SSAS). Residues 416–428 (GDSSAEPSITSDY) are compositionally biased toward polar residues. A compositionally biased stretch (low complexity) spans 429–716 (SSSELSVVPS…SEYTATWTTT (288 aa)). Residue N681 is glycosylated (N-linked (GlcNAc...) asparagine). Composition is skewed to polar residues over residues 717–729 (NSDG…SGII) and 883–935 (GLST…PVPT). N891, N940, N944, N948, N952, N956, N960, N966, N970, N974, N984, N988, N992, N996, N1000, N1010, N1014, N1018, N1022, N1026, N1032, N1046, N1050, N1058, N1062, N1072, N1076, N1080, N1086, N1090, N1094, N1098, N1114, N1118, N1122, N1128, N1132, N1136, N1140, N1150, N1154, N1158, N1172, N1180, and N1186 each carry an N-linked (GlcNAc...) asparagine glycan. Positions 941-959 (GSNNGSDNGSNNGSNNGSN) are enriched in low complexity. Gly residues predominate over residues 960–982 (NGSGSGNGSNNGSNNGSGSGNGF). Over residues 983–1043 (NNGSDNGSNN…SNSGSDSGNG (61 aa)) the composition is skewed to low complexity. A compositionally biased stretch (gly residues) spans 1062 to 1078 (NGSGSGGESNNGSGNGS). Residues 1079-1097 (DNGSSPDNGSNNGSNNGSN) are compositionally biased toward low complexity. The segment covering 1139 to 1167 (NNGSNSGSNSDNGSNNSSGNGSSSDLGSV) has biased composition (low complexity). Composition is skewed to low complexity over residues 1175 to 1194 (NEGS…GAGA) and 1205 to 1217 (SPSA…SSAS). Residue N1225 is glycosylated (N-linked (GlcNAc...) asparagine). N1225 carries the GPI-anchor amidated asparagine lipid modification. Residues 1226 to 1249 (GSGKLLNGKVLTLSVLSSMVVVFL) constitute a propeptide, removed in mature form.

It belongs to the HYR1/IFF family. Post-translationally, the GPI-anchor is attached to the protein in the endoplasmic reticulum and serves to target the protein to the cell surface. There, the glucosamine-inositol phospholipid moiety is cleaved off and the GPI-modified mannoprotein is covalently attached via its lipidless GPI glycan remnant to the 1,6-beta-glucan of the outer cell wall layer.

It localises to the secreted. The protein localises to the cell wall. It is found in the membrane. Its function is as follows. GPI-anchored cell wall protein involved in cell wall organization, hyphal growth, as well as in host-fungal interaction and virulence. This chain is Hyphally regulated cell wall protein 3 (HYR3), found in Candida albicans (strain SC5314 / ATCC MYA-2876) (Yeast).